The chain runs to 417 residues: Transmembrane protease serine 11G (417 aa).

At 1–22 (MYQPGILGRRKRVCKPWTVALT) the chain is on the cytoplasmic side. A helical; Signal-anchor for type II membrane protein membrane pass occupies residues 23-43 (TTAALLALAVLIGLLVYFLVY). Residues 44-417 (EEKTHYYQAS…RNWIKSKTNI (374 aa)) lie on the Extracellular side of the membrane. The region spanning 46-165 (KTHYYQASFW…PYLREMNAAQ (120 aa)) is the SEA domain. The region spanning 186–416 (IADGKPAGSN…YRNWIKSKTN (231 aa)) is the Peptidase S1 domain. A disulfide bond links cysteine 211 and cysteine 227. Catalysis depends on charge relay system residues histidine 226 and aspartate 271. 2 disulfides stabilise this stretch: cysteine 336–cysteine 352 and cysteine 363–cysteine 392. Catalysis depends on serine 367, which acts as the Charge relay system.

This sequence belongs to the peptidase S1 family. As to expression, highest expression in lung and tongue. Also expressed in brain, colon, heart and liver. Isoform 1 is the predominant form in tongue whereas both isoforms are expressed in similar amounts in lung. At the cellular level, expression is confined to epithelial cells within the cleft of the circumvallate papillae extending into the ducts of the minor salivary glands, the respiratory epithelium of the nasal cavity and tear gland ducts.

It localises to the membrane. This Rattus norvegicus (Rat) protein is Transmembrane protease serine 11G (Tmprss11g).